Reading from the N-terminus, the 477-residue chain is ATP synthase subunit beta (477 aa).

Position 148-155 (148-155) interacts with ATP; the sequence is GGAGVGKT.

Belongs to the ATPase alpha/beta chains family. In terms of assembly, F-type ATPases have 2 components, CF(1) - the catalytic core - and CF(0) - the membrane proton channel. CF(1) has five subunits: alpha(3), beta(3), gamma(1), delta(1), epsilon(1). CF(0) has three main subunits: a(1), b(2) and c(9-12). The alpha and beta chains form an alternating ring which encloses part of the gamma chain. CF(1) is attached to CF(0) by a central stalk formed by the gamma and epsilon chains, while a peripheral stalk is formed by the delta and b chains.

It localises to the cell inner membrane. The catalysed reaction is ATP + H2O + 4 H(+)(in) = ADP + phosphate + 5 H(+)(out). In terms of biological role, produces ATP from ADP in the presence of a proton gradient across the membrane. The catalytic sites are hosted primarily by the beta subunits. The polypeptide is ATP synthase subunit beta (Psychrobacter cryohalolentis (strain ATCC BAA-1226 / DSM 17306 / VKM B-2378 / K5)).